A 62-amino-acid chain; its full sequence is Large ribosomal subunit protein bL32 (62 aa).

Over residues 1–19 the composition is skewed to basic residues; that stretch reads MPNPKRRHSKARTGNRRAH. Residues 1 to 23 form a disordered region; the sequence is MPNPKRRHSKARTGNRRAHDHLS.

Belongs to the bacterial ribosomal protein bL32 family.

This is Large ribosomal subunit protein bL32 from Koribacter versatilis (strain Ellin345).